Reading from the N-terminus, the 880-residue chain is Probable dipeptidyl-aminopeptidase B (880 aa).

The span at 1–26 (MPRQRAPKEEEAELLTKQERSARSSE) shows a compositional bias: basic and acidic residues. The tract at residues 1 to 71 (MPRQRAPKEE…KYTDEDDEAQ (71 aa)) is disordered. The Cytoplasmic segment spans residues 1–93 (MPRQRAPKEE…PISVDKKTRR (93 aa)). A compositionally biased stretch (low complexity) spans 30-40 (DTSISSISTTS). The helical; Signal-anchor for type II membrane protein transmembrane segment at 94–114 (WLWIVGIACVTGWALALVFFL) threads the bilayer. The Vacuolar portion of the chain corresponds to 115–880 (MSGSYKHVST…AQVDARMERR (766 aa)). N-linked (GlcNAc...) asparagine glycosylation occurs at asparagine 533. Serine 724 (charge relay system) is an active-site residue. The N-linked (GlcNAc...) asparagine glycan is linked to asparagine 778. Catalysis depends on charge relay system residues aspartate 801 and histidine 834.

The protein belongs to the peptidase S9B family.

The protein resides in the vacuole membrane. The catalysed reaction is Release of an N-terminal dipeptide, Xaa-Yaa-|-Zaa-, from a polypeptide, preferentially when Yaa is Pro, provided Zaa is neither Pro nor hydroxyproline.. Functionally, type IV dipeptidyl-peptidase which removes N-terminal dipeptides sequentially from polypeptides having unsubstituted N-termini provided that the penultimate residue is proline. This chain is Probable dipeptidyl-aminopeptidase B (dapB), found in Pyrenophora tritici-repentis (strain Pt-1C-BFP) (Wheat tan spot fungus).